A 337-amino-acid chain; its full sequence is Phosphatidate cytidylyltransferase, mitochondrial (337 aa).

The protein belongs to the TAM41 family. Mg(2+) is required as a cofactor.

It is found in the mitochondrion inner membrane. The catalysed reaction is a 1,2-diacyl-sn-glycero-3-phosphate + CTP + H(+) = a CDP-1,2-diacyl-sn-glycerol + diphosphate. It functions in the pathway phospholipid metabolism; CDP-diacylglycerol biosynthesis; CDP-diacylglycerol from sn-glycerol 3-phosphate: step 3/3. Catalyzes the conversion of phosphatidic acid (PA) to CDP-diacylglycerol (CDP-DAG), an essential intermediate in the synthesis of phosphatidylglycerol, cardiolipin and phosphatidylinositol. The protein is Phosphatidate cytidylyltransferase, mitochondrial (Tamm41) of Mus musculus (Mouse).